Consider the following 38-residue polypeptide: Alpha-2-macroglobulin homolog (38 aa).

Positions cysteine 27–glutamine 30 form a cross-link, isoglutamyl cysteine thioester (Cys-Gln).

Belongs to the protease inhibitor I39 (alpha-2-macroglobulin) family. In terms of assembly, homodimer; disulfide-linked. As to expression, hemolymph.

The protein resides in the secreted. Is able to inhibit all four classes of proteinases by a unique 'trapping' mechanism. This protein has a peptide stretch, called the 'bait region' which contains specific cleavage sites for different proteinases. When a proteinase cleaves the bait region, a conformational change is induced in the protein which traps the proteinase. The entrapped enzyme remains active against low molecular weight substrates (activity against high molecular weight substrates is greatly reduced). Following cleavage in the bait region a thioester bond is hydrolyzed and mediates the covalent binding of the protein to the proteinase. The sequence is that of Alpha-2-macroglobulin homolog from Homarus americanus (American lobster).